The primary structure comprises 209 residues: Uracil phosphoribosyltransferase (209 aa).

Residues Arg79, Arg104, and 131 to 139 (DPMLATGGS) each bind 5-phospho-alpha-D-ribose 1-diphosphate. Uracil is bound by residues Ile194 and 199–201 (GDA). Asp200 serves as a coordination point for 5-phospho-alpha-D-ribose 1-diphosphate.

This sequence belongs to the UPRTase family. Mg(2+) serves as cofactor.

It carries out the reaction UMP + diphosphate = 5-phospho-alpha-D-ribose 1-diphosphate + uracil. It functions in the pathway pyrimidine metabolism; UMP biosynthesis via salvage pathway; UMP from uracil: step 1/1. Allosterically activated by GTP. Its function is as follows. Catalyzes the conversion of uracil and 5-phospho-alpha-D-ribose 1-diphosphate (PRPP) to UMP and diphosphate. The polypeptide is Uracil phosphoribosyltransferase (Chromohalobacter salexigens (strain ATCC BAA-138 / DSM 3043 / CIP 106854 / NCIMB 13768 / 1H11)).